Consider the following 93-residue polypeptide: Small ribosomal subunit protein uS19 (93 aa).

This sequence belongs to the universal ribosomal protein uS19 family.

Its function is as follows. Protein S19 forms a complex with S13 that binds strongly to the 16S ribosomal RNA. The sequence is that of Small ribosomal subunit protein uS19 from Streptococcus gordonii (strain Challis / ATCC 35105 / BCRC 15272 / CH1 / DL1 / V288).